Reading from the N-terminus, the 365-residue chain is Histidinol-phosphate aminotransferase (365 aa).

Lys-222 is modified (N6-(pyridoxal phosphate)lysine).

It belongs to the class-II pyridoxal-phosphate-dependent aminotransferase family. Histidinol-phosphate aminotransferase subfamily. In terms of assembly, homodimer. The cofactor is pyridoxal 5'-phosphate.

The enzyme catalyses L-histidinol phosphate + 2-oxoglutarate = 3-(imidazol-4-yl)-2-oxopropyl phosphate + L-glutamate. Its pathway is amino-acid biosynthesis; L-histidine biosynthesis; L-histidine from 5-phospho-alpha-D-ribose 1-diphosphate: step 7/9. The chain is Histidinol-phosphate aminotransferase from Geobacillus thermodenitrificans (strain NG80-2).